The chain runs to 237 residues: Chaplin-B (237 aa).

A signal peptide spans 1–26 (MRRVTRNGVLAVAASGALAVTMPAYA). The Chaplin 1 domain maps to 42-82 (SPGLISGNTVQLPVDVPVDVCGNTVNVVGLLNPAAGNGCAD). Disordered stretches follow at residues 81–127 (ADSG…LSGN) and 148–216 (GIGN…TLAG). Over residues 101–115 (GSATEATSGGAAAEG) the composition is skewed to low complexity. Positions 120–160 (SPGVLSGNGVQLPVHLPVNVSGNSVNVVGIGNPAVGNESTN) constitute a Chaplin 2 domain. Residues 169-178 (VRPPAEPEPS) are compositionally biased toward pro residues. Residues 202–206 (LAHTG) carry the LPXTG sorting signal motif. A Pentaglycyl murein peptidoglycan amidated threonine modification is found at T205. The propeptide at 206–237 (GTDRTLPTLAGGAALVLGGTVLYRRFRPGSGD) is removed by sortase.

This sequence belongs to the chaplin family. Long chaplin subfamily.

The protein resides in the secreted. It is found in the cell wall. Its function is as follows. One of 8 partially redundant surface-active proteins required for efficient formation of aerial mycelium; the short chaplins assemble into a hydrophobic, amyloidal fibrillar surface layer that envelopes and protects aerial hyphae and spores, presumably anchored to the long chaplins. Chaplins have an overlapping function with the surface-active SapB peptide; chaplins are essential on minimal medium while on rich medium both chaplins and SapB are required for efficient aerial hyphae formation. The long chaplins (ChpA, ChpB, ChpC) are not absolutely necessary for short chaplin localization or rodlet formation, but probably play a role in initiating aerial hyphae development. Chaplins are also involved in cell attachment to a hydrophobic surface. The protein is Chaplin-B of Streptomyces coelicolor (strain ATCC BAA-471 / A3(2) / M145).